A 296-amino-acid polypeptide reads, in one-letter code: Stanniocalcin-2 (296 aa).

An N-terminal signal peptide occupies residues 1 to 24 (MCAERLGQFVTLALVFATLDPAQG). The segment at 21–44 (PAQGTDSTNPPEGPQDRSSQQKGR) is disordered. The segment covering 24–44 (GTDSTNPPEGPQDRSSQQKGR) has biased composition (polar residues). An N-linked (GlcNAc...) asparagine glycan is attached at Asn-73. The segment at 218–296 (PPTAAPEHQP…EQSEYSDIRR (79 aa)) is disordered. A compositionally biased stretch (basic and acidic residues) spans 240-258 (RDTDHHLTANRGAKGERGS). Residues 272–282 (GQSAQGPSGSS) show a composition bias toward low complexity.

Belongs to the stanniocalcin family. As to quaternary structure, homodimer; disulfide-linked. In terms of tissue distribution, found in a variety of tissues including skeletal muscle, small intestine, kidney, liver and brain.

It localises to the secreted. Has an anti-hypocalcemic action on calcium and phosphate homeostasis. The polypeptide is Stanniocalcin-2 (Stc2) (Mus musculus (Mouse)).